The sequence spans 151 residues: UPF0208 membrane protein YfbV (151 aa).

The next 2 helical transmembrane spans lie at 46 to 65 and 69 to 91; these read YAIR…QIAL and LGPA…WWLG.

It belongs to the UPF0208 family.

It localises to the cell inner membrane. The protein is UPF0208 membrane protein YfbV of Escherichia coli O1:K1 / APEC.